The sequence spans 354 residues: 5,10-methenyltetrahydromethanopterin hydrogenase (354 aa).

This sequence belongs to the HMD family.

The catalysed reaction is 5,10-methenyl-5,6,7,8-tetrahydromethanopterin + H2 = 5,10-methylenetetrahydromethanopterin + H(+). It functions in the pathway one-carbon metabolism; methanogenesis from CO(2); 5,10-methylene-5,6,7,8-tetrahydromethanopterin from 5,10-methenyl-5,6,7,8-tetrahydromethanopterin (hydrogen route): step 1/1. Its function is as follows. Catalyzes the reversible reduction of methenyl-H(4)MPT(+) to methylene-H(4)MPT. The sequence is that of 5,10-methenyltetrahydromethanopterin hydrogenase from Methanococcus maripaludis (strain C7 / ATCC BAA-1331).